Reading from the N-terminus, the 292-residue chain is MKFGRKIVMDKVKVTYQYLLFVWRRSEQDNIKVPAGHLAYVTLLSIVPLLAVIFYMLAAFPVFSDLKGMLEDLIYNNLLPTSGDTIQEHISGFIENTKKMSMMGIGSLIAIALLLISTIDQTINRIWRCTNKRSRIQSFTIYWTILSLGPVIIGASLALSSYLFSVFQEHGSLSFGQRLLSLMPFILTWLTFAGVYTLVPHQRVSFRYALIGGLIAAILFFFGTDLFRLYITNFPSQQIIYGALAVIPILFVWIYYSWLIVLIGAEVTATLEEFLKQQEDNNVTKEYLGADI.

6 helical membrane-spanning segments follow: residues Leu-43–Phe-63, Met-100–Asp-120, Phe-139–Leu-159, Leu-179–Val-199, Ala-209–Leu-229, and Ala-243–Ile-263.

The protein belongs to the UPF0761 family.

It is found in the cell inner membrane. The sequence is that of UPF0761 membrane protein Ping_3482 from Psychromonas ingrahamii (strain DSM 17664 / CCUG 51855 / 37).